Reading from the N-terminus, the 338-residue chain is 3-phosphoshikimate 1-carboxyvinyltransferase 2 (338 aa).

R25 is a phosphoenolpyruvate binding site. Residues S72, S73, Q74, S100, D225, and K252 each contribute to the 3-phosphoshikimate site. Residue Q74 participates in phosphoenolpyruvate binding. D225 (proton acceptor) is an active-site residue. Phosphoenolpyruvate is bound by residues R256, R298, and K323.

Belongs to the EPSP synthase family.

The protein resides in the plastid. Its subcellular location is the chloroplast. The enzyme catalyses 3-phosphoshikimate + phosphoenolpyruvate = 5-O-(1-carboxyvinyl)-3-phosphoshikimate + phosphate. It functions in the pathway metabolic intermediate biosynthesis; chorismate biosynthesis; chorismate from D-erythrose 4-phosphate and phosphoenolpyruvate: step 6/7. In terms of biological role, catalyzes the transfer of the enolpyruvyl moiety of phosphoenolpyruvate (PEP) to the 5-hydroxyl of shikimate-3-phosphate (S3P) to produce enolpyruvyl shikimate-3-phosphate and inorganic phosphate. The chain is 3-phosphoshikimate 1-carboxyvinyltransferase 2 (EPSPS-2) from Nicotiana tabacum (Common tobacco).